Consider the following 807-residue polypeptide: Tyrosine-protein kinase receptor torso (807 aa).

Positions 1-28 (MYSEGKLLKVFLIFAGFIIFSLCGEVVS) are cleaved as a signal peptide. Topologically, residues 29 to 370 (QRYPPAPGLL…RAFTPGMLRW (342 aa)) are extracellular. 4 cysteine pairs are disulfide-bonded: C46–C61, C81–C203, C210–C239, and C259–C265. Residues N54, N171, N183, and N195 are each glycosylated (N-linked (GlcNAc...) asparagine). Residues N307, N323, and N344 are each glycosylated (N-linked (GlcNAc...) asparagine). Residues 371–391 (VWAGATAGAGCAAGGLLAATL) form a helical membrane-spanning segment. Residues 392–807 (LCCGHRRATS…SPPVIQTKTA (416 aa)) lie on the Cytoplasmic side of the membrane. The region spanning 439-738 (VLLHEVIGEG…PTFPELHQKL (300 aa)) is the Protein kinase domain. Residues 445-453 (IGEGAFGVV) and K468 each bind ATP. D607 acts as the Proton acceptor in catalysis.

Belongs to the protein kinase superfamily. Tyr protein kinase family. In terms of assembly, homodimer; disulfide-linked. Mg(2+) serves as cofactor. Post-translationally, may be auto-phosphorylated on tyrosine residues. At least one of the 3 cysteine residues Cys-381, Cys-393 or Cys-394 is involved in the formation of interchain disulfide bonds. The disulfide bond sites in the extracellular region are not involved in homodimer formation.

Its subcellular location is the cell membrane. The enzyme catalyses L-tyrosyl-[protein] + ATP = O-phospho-L-tyrosyl-[protein] + ADP + H(+). Probable receptor tyrosine kinase. During postembryonic development, involved in the initiation of metamorphosis probably by inducing the production of ecdysone in response to prothoracicotropic hormone (PTTH). Binding to PTTH stimulates activation of canonical MAPK signaling leading to ERK phosphorylation. This is Tyrosine-protein kinase receptor torso from Bombyx mori (Silk moth).